Consider the following 268-residue polypeptide: MICOS complex subunit MIC27 (268 aa).

A mitochondrion-targeting transit peptide spans 1–27 (MAAIRMGKLTTMPAGLIYASVSVHAAK). Residues 28-110 (QEESKKQLVK…YVYLKNPPRD (83 aa)) are Mitochondrial intermembrane-facing. A helical transmembrane segment spans residues 111–129 (FLPKMGVITVSGLAGLVSA). The Mitochondrial matrix segment spans residues 130-137 (RKGSKFKK). The chain crosses the membrane as a helical span at residues 138–155 (ITYPLGLATLGATVCYPV). The Mitochondrial intermembrane segment spans residues 156-268 (QSVIIAKVTA…EDIDMYSTRS (113 aa)). Residues 187–200 (SKEESLPKPKEKTK) show a composition bias toward basic and acidic residues. The disordered stretch occupies residues 187-268 (SKEESLPKPK…EDIDMYSTRS (82 aa)). Residue Ser-204 is modified to Phosphoserine. Basic and acidic residues predominate over residues 249–260 (KLMDHGQSHPED).

The protein belongs to the apolipoprotein O/MICOS complex subunit Mic27 family. As to quaternary structure, component of the mitochondrial contact site and cristae organizing system (MICOS) complex, composed of at least MICOS10/MIC10, CHCHD3/MIC19, CHCHD6/MIC25, APOOL/MIC27, IMMT/MIC60, APOO/MIC23/MIC26 and MICOS13/MIC13. This complex was also known under the names MINOS or MitOS complex. The MICOS complex associates with mitochondrial outer membrane proteins SAMM50, MTX1 and MTX2 (together described as components of the mitochondrial outer membrane sorting assembly machinery (SAM) complex) and DNAJC11, mitochondrial inner membrane protein TMEM11 and with HSPA9. The MICOS and SAM complexes together with DNAJC11 are part of a large protein complex spanning both membranes termed the mitochondrial intermembrane space bridging (MIB) complex. Interacts with MICOS10/MIC10, IMMT/MIC60 and APOO/MIC23/MIC26.

It is found in the mitochondrion inner membrane. Its subcellular location is the mitochondrion. In terms of biological role, component of the MICOS complex, a large protein complex of the mitochondrial inner membrane that plays crucial roles in the maintenance of crista junctions, inner membrane architecture, and formation of contact sites to the outer membrane. Specifically binds to cardiolipin (in vitro) but not to the precursor lipid phosphatidylglycerol. Plays a crucial role in crista junction formation and mitochondrial function,. This chain is MICOS complex subunit MIC27 (APOOL), found in Homo sapiens (Human).